A 1091-amino-acid polypeptide reads, in one-letter code: ATP-dependent RNA helicase ddx54 (1091 aa).

Disordered stretches follow at residues 1 to 63 (MVKP…KEEF) and 150 to 231 (DNSN…KTGG). Basic and acidic residues predominate over residues 26 to 35 (MKGKKLETKS). Residues 150-161 (DNSNFDNNGDQF) are compositionally biased toward polar residues. Residues 196-207 (KKEEIESSEKFE) show a composition bias toward basic and acidic residues. The short motif at 230 to 258 (GGFQSMDLTKNLLKAILKKGFNVPTPIQR) is the Q motif element. The Helicase ATP-binding domain maps to 261 to 433 (IPMILDGHDI…RAGLNNPKLI (173 aa)). 274–281 (ARTGSGKT) is an ATP binding site. The DEAD box motif lies at 381–384 (DEAD). The 155-residue stretch at 478–632 (TETTTTTTTN…KFQYEGQTIN (155 aa)) folds into the Helicase C-terminal domain. Disordered stretches follow at residues 801–896 (EEML…TPEN) and 933–1091 (KRKG…KSRK). Residues 814–823 (DNNKDIKMNE) are compositionally biased toward basic and acidic residues. Residues 824-855 (NDDENDDDDEEGENDDDEEEENEKDEDDEEDE) are compositionally biased toward acidic residues. 3 stretches are compositionally biased toward basic and acidic residues: residues 865-874 (ESSDKNDNNK), 944-975 (DADR…EEWK), and 1008-1019 (QGREKEKKDNKA). A compositionally biased stretch (basic residues) spans 1020 to 1029 (SHAKGSHGLK). A compositionally biased stretch (basic and acidic residues) spans 1031–1052 (RPSELKDKNQISKNRSEKERKM). A compositionally biased stretch (gly residues) spans 1068–1079 (SGGGGGGKGSKF).

This sequence belongs to the DEAD box helicase family. DDX54/DBP10 subfamily.

It localises to the nucleus. It is found in the nucleolus. The enzyme catalyses ATP + H2O = ADP + phosphate + H(+). Functionally, ATP-binding RNA helicase which may be involved in the ribosome biogenesis. This chain is ATP-dependent RNA helicase ddx54 (helA), found in Dictyostelium discoideum (Social amoeba).